The sequence spans 87 residues: uncharacterized protein (87 aa).

The helical transmembrane segment at 44 to 64 (DALYLAGSTIFTIVTTLVAWF) threads the bilayer.

Belongs to the SPP1 holin family.

It is found in the membrane. This is an uncharacterized protein from Bacillus licheniformis.